The chain runs to 397 residues: Cytochrome b (397 aa).

4 helical membrane passes run F38 to M58, W82 to F104, V119 to V139, and F185 to A205. Positions 88 and 102 each coordinate heme b. Heme b-binding residues include H189 and H203. H208 contacts a ubiquinone. The next 4 membrane-spanning stretches (helical) occupy residues F231–F251, A295–K315, I327–C347, and F354–P373.

The protein belongs to the cytochrome b family. In terms of assembly, the main subunits of complex b-c1 are: cytochrome b, cytochrome c1 and the Rieske protein. The cofactor is heme b.

The protein localises to the mitochondrion inner membrane. Its function is as follows. Component of the ubiquinol-cytochrome c reductase complex (complex III or cytochrome b-c1 complex) that is part of the mitochondrial respiratory chain. The b-c1 complex mediates electron transfer from ubiquinol to cytochrome c. Contributes to the generation of a proton gradient across the mitochondrial membrane that is then used for ATP synthesis. This is Cytochrome b (MT-CYB) from Oryza sativa subsp. indica (Rice).